The chain runs to 510 residues: Crotonobetaine/carnitine--CoA ligase (510 aa).

This sequence belongs to the ATP-dependent AMP-binding enzyme family.

It carries out the reaction 4-(trimethylamino)butanoate + ATP + CoA = 4-(trimethylamino)butanoyl-CoA + AMP + diphosphate. The enzyme catalyses crotonobetaine + ATP + CoA = crotonobetainyl-CoA + AMP + diphosphate. The catalysed reaction is (R)-carnitine + ATP + CoA = (R)-carnitinyl-CoA + AMP + diphosphate. It functions in the pathway amine and polyamine metabolism; carnitine metabolism. In terms of biological role, catalyzes the transfer of CoA to carnitine, generating the initial carnitinyl-CoA needed for the CaiB reaction cycle. Also has activity toward crotonobetaine and gamma-butyrobetaine. The protein is Crotonobetaine/carnitine--CoA ligase of Shigella flexneri serotype 5b (strain 8401).